A 265-amino-acid chain; its full sequence is S-adenosylmethionine decarboxylase proenzyme (265 aa).

Residue S114 is the Schiff-base intermediate with substrate; via pyruvic acid of the active site. S114 is subject to Pyruvic acid (Ser); by autocatalysis. Residue H119 is the Proton acceptor; for processing activity of the active site. The active-site Proton donor; for catalytic activity is C142.

It belongs to the prokaryotic AdoMetDC family. Type 2 subfamily. Heterooctamer of four alpha and four beta chains arranged as a tetramer of alpha/beta heterodimers. Pyruvate serves as cofactor. Post-translationally, is synthesized initially as an inactive proenzyme. Formation of the active enzyme involves a self-maturation process in which the active site pyruvoyl group is generated from an internal serine residue via an autocatalytic post-translational modification. Two non-identical subunits are generated from the proenzyme in this reaction, and the pyruvate is formed at the N-terminus of the alpha chain, which is derived from the carboxyl end of the proenzyme. The post-translation cleavage follows an unusual pathway, termed non-hydrolytic serinolysis, in which the side chain hydroxyl group of the serine supplies its oxygen atom to form the C-terminus of the beta chain, while the remainder of the serine residue undergoes an oxidative deamination to produce ammonia and the pyruvoyl group blocking the N-terminus of the alpha chain.

It carries out the reaction S-adenosyl-L-methionine + H(+) = S-adenosyl 3-(methylsulfanyl)propylamine + CO2. Its pathway is amine and polyamine biosynthesis; S-adenosylmethioninamine biosynthesis; S-adenosylmethioninamine from S-adenosyl-L-methionine: step 1/1. Its function is as follows. Catalyzes the decarboxylation of S-adenosylmethionine to S-adenosylmethioninamine (dcAdoMet), the propylamine donor required for the synthesis of the polyamines spermine and spermidine from the diamine putrescine. This is S-adenosylmethionine decarboxylase proenzyme from Buchnera aphidicola subsp. Acyrthosiphon pisum (strain 5A).